Reading from the N-terminus, the 604-residue chain is Prostaglandin G/H synthase 2 (604 aa).

The N-terminal stretch at Met-1–Ala-17 is a signal peptide. Residues Ala-18 to Ser-55 form the EGF-like domain. Disulfide bonds link Cys-21-Cys-32, Cys-22-Cys-145, Cys-26-Cys-42, and Cys-44-Cys-54. Asn-53 carries an N-linked (GlcNAc...) asparagine glycan. Arg-106 is a substrate binding site. A glycan (N-linked (GlcNAc...) asparagine) is linked at Asn-130. The active-site Proton acceptor is His-193. Residue Tyr-341 participates in substrate binding. Tyr-371 (for cyclooxygenase activity) is an active-site residue. A heme b-binding site is contributed by His-374. Residue Asn-396 is glycosylated (N-linked (GlcNAc...) asparagine). Cys-526 carries the S-nitrosocysteine modification. A disulfide bond links Cys-555 and Cys-561. Asn-580 carries N-linked (GlcNAc...) asparagine glycosylation.

This sequence belongs to the prostaglandin G/H synthase family. Homodimer. The cofactor is heme b. Post-translationally, S-nitrosylation by NOS2 (iNOS) activates enzyme activity. S-nitrosylation may take place on different Cys residues in addition to Cys-526.

It localises to the microsome membrane. The protein localises to the endoplasmic reticulum membrane. Its subcellular location is the nucleus inner membrane. It is found in the nucleus outer membrane. The catalysed reaction is (5Z,8Z,11Z,14Z)-eicosatetraenoate + AH2 + 2 O2 = prostaglandin H2 + A + H2O. It carries out the reaction (5Z,8Z,11Z,14Z)-eicosatetraenoate + 2 O2 = prostaglandin G2. It catalyses the reaction prostaglandin G2 + AH2 = prostaglandin H2 + A + H2O. The enzyme catalyses (5Z,8Z,11Z,14Z,17Z)-eicosapentaenoate + 2 O2 = prostaglandin G3. The catalysed reaction is prostaglandin G3 + AH2 = prostaglandin H3 + A + H2O. It carries out the reaction (8Z,11Z,14Z)-eicosatrienoate + 2 O2 = prostaglandin G1. It catalyses the reaction prostaglandin G1 + AH2 = prostaglandin H1 + A + H2O. The enzyme catalyses 2-(5Z,8Z,11Z,14Z)-eicosatetraenoyl-sn-glycero-3-phosphoethanolamine + 2 O2 = 2-(prostaglandin G2)-sn-glycero-3-phosphoethanolamine. The catalysed reaction is 2-(prostaglandin G2)-sn-glycero-3-phosphoethanolamine + AH2 = 2-(prostaglandin H2)-sn-glycero-3-phosphoethanolamine + A + H2O. It carries out the reaction 2-(5Z,8Z,11Z,14Z)-eicosatetraenoyl-sn-glycero-3-phosphocholine + 2 O2 = 2-(prostaglandin G2)-sn-glycero-3-phosphocholine. It catalyses the reaction 2-(prostaglandin G2)-sn-glycero-3-phosphocholine + AH2 = 2-(prostaglandin H2)-sn-glycero-3-phosphocholine + A + H2O. The enzyme catalyses (15S)-hydroperoxy-(5Z,8Z,11Z,13E)-eicosatetraenoate + AH2 = (15S)-hydroxy-(5Z,8Z,11Z,13E)-eicosatetraenoate + A + H2O. The catalysed reaction is 2-(5Z,8Z,11Z,14Z)-eicosatetraenoyl-sn-glycero-3-phosphocholine + AH2 + O2 = 2-[(15S)-hydroxy-(5Z,8Z,11Z,13E)-eicosatetraenoyl]-sn-glycero-3-phosphocholine + A + H2O. It carries out the reaction 2-(5Z,8Z,11Z,14Z)-eicosatetraenoyl-sn-glycero-3-phosphocholine + AH2 + O2 = 2-[(15R)-hydroxy-(5Z,8Z,11Z,13E)-eicosatetraenoyl]-sn-glycero-3-phosphocholine + A + H2O. It catalyses the reaction 2-(5Z,8Z,11Z,14Z)-eicosatetraenoyl-sn-glycero-3-phosphocholine + AH2 + O2 = 2-[(11R)-hydroxy-(5Z,8Z,12E,14Z)-eicosatetraenoyl]-sn-glycero-3-phosphocholine + A + H2O. The enzyme catalyses (9Z,12Z)-octadecadienoate + AH2 + O2 = 9-hydroxy-(10E,12Z)-octadecadienoate + A + H2O. The catalysed reaction is (9Z,12Z)-octadecadienoate + AH2 + O2 = 13-hydroxy-(9Z,11E)-octadecadienoate + A + H2O. It carries out the reaction (5Z,8Z,11Z,14Z)-eicosatetraenoate + AH2 + O2 = (15R)-hydroxy-(5Z,8Z,11Z,13E)-eicosatetraenoate + A + H2O. It catalyses the reaction (5Z,8Z,11Z,14Z)-eicosatetraenoate + AH2 + O2 = (11R)-hydroxy-(5Z,8Z,12E,14Z)-eicosatetraenoate + A + H2O. The enzyme catalyses (5Z,8Z,11Z,14Z,17Z)-eicosapentaenoate + AH2 + O2 = (11R)-hydroxy-(5Z,8Z,12E,14Z,17Z)-eicosapentaenoate + A + H2O. The catalysed reaction is (5Z,8Z,11Z,14Z,17Z)-eicosapentaenoate + AH2 + O2 = (18S)-hydroxy-(5Z,8Z,11Z,14Z,16E)-eicosapentaenoate + A + H2O. It carries out the reaction (5Z,8Z,11Z,14Z,17Z)-eicosapentaenoate + AH2 + O2 = (18R)-hydroxy-(5Z,8Z,11Z,14Z,16E)-eicosapentaenoate + A + H2O. It catalyses the reaction (5Z,8Z,11Z,14Z,17Z)-eicosapentaenoate + AH2 + O2 = (15R)-hydroxy-(5Z,8Z,11Z,13E,17Z)-eicosapentaenoate + A + H2O. The enzyme catalyses (5Z,8Z,11Z,14Z,17Z)-eicosapentaenoate + AH2 + O2 = (15S)-hydroxy-(5Z,8Z,11Z,13E,17Z)-eicosapentaenoate + A + H2O. The catalysed reaction is (7Z,10Z,13Z,16Z,19Z)-docosapentaenoate + AH2 + O2 = 13R-hydroxy-(7Z,10Z,14E,16Z,19Z)-docosapentaenoate + A + H2O. It carries out the reaction (4Z,7Z,10Z,13Z,16Z,19Z)-docosahexaenoate + AH2 + O2 = 13-hydroxy-(4Z,7Z,10Z,14E,16Z,19Z)-docosahexaenoate + A + H2O. It catalyses the reaction (5S)-hydroxy-(6E,8Z,11Z,14Z)-eicosatetraenoate + AH2 + O2 = (5S,15R)-dihydroxy-(6E,8Z,11Z,13E)-eicosatetraenoate + A + H2O. The enzyme catalyses (4Z,7Z,10Z,13Z,16Z,19Z)-docosahexaenoate + AH2 + O2 = 17R-hydroxy-(4Z,7Z,10Z,13Z,15E,19Z)-docosahexaenoate + A + H2O. The catalysed reaction is (5S)-hydroxy-(6E,8Z,11Z,14Z)-eicosatetraenoate + AH2 + O2 = (5S,15S)-dihydroxy-(6E,8Z,11Z,13E)-eicosatetraenoate + A + H2O. It carries out the reaction (5S)-hydroxy-(6E,8Z,11Z,14Z)-eicosatetraenoate + AH2 + O2 = (5S,11R)-dihydroxy-(6E,8Z,12E,14Z)-eicosatetraenoate + A + H2O. It catalyses the reaction 2-(5Z,8Z,11Z,14Z-eicosatetraenoyl)-glycerol + 2 O2 = 2-glyceryl-prostaglandin G2. The enzyme catalyses 2-glyceryl-prostaglandin G2 + AH2 = 2-glyceryl-prostaglandin H2 + A + H2O. The catalysed reaction is (5Z,8Z,11Z,14Z)-eicosatetraenoate + O2 = (15R)-hydroperoxy-(5Z,8Z,11Z,13E)-eicosatetraenoate. It carries out the reaction (5Z,8Z,11Z,14Z)-eicosatetraenoate + O2 = 11R-hydroperoxy-(5Z,8Z,12E,14Z)-eicosatetraenoate. It catalyses the reaction (9Z,12Z)-octadecadienoate + AH2 + O2 = (9R)-hydroxy-(10E,12Z)-octadecadienoate + A + H2O. The enzyme catalyses (9Z,12Z)-octadecadienoate + AH2 + O2 = (9S)-hydroxy-(10E,12Z)-octadecadienoate + A + H2O. The catalysed reaction is (9Z,12Z)-octadecadienoate + AH2 + O2 = (13S)-hydroxy-(9Z,11E)-octadecadienoate + A + H2O. It carries out the reaction (9Z,12Z)-octadecadienoate + AH2 + O2 = (13R)-hydroxy-(9Z,11E)-octadecadienoate + A + H2O. The protein operates within lipid metabolism; prostaglandin biosynthesis. Its function is as follows. Dual cyclooxygenase and peroxidase in the biosynthesis pathway of prostanoids, a class of C20 oxylipins mainly derived from arachidonate ((5Z,8Z,11Z,14Z)-eicosatetraenoate, AA, C20:4(n-6)), with a particular role in the inflammatory response. The cyclooxygenase activity oxygenates AA to the hydroperoxy endoperoxide prostaglandin G2 (PGG2), and the peroxidase activity reduces PGG2 to the hydroxy endoperoxide prostaglandin H2 (PGH2), the precursor of all 2-series prostaglandins and thromboxanes. This complex transformation is initiated by abstraction of hydrogen at carbon 13 (with S-stereochemistry), followed by insertion of molecular O2 to form the endoperoxide bridge between carbon 9 and 11 that defines prostaglandins. The insertion of a second molecule of O2 (bis-oxygenase activity) yields a hydroperoxy group in PGG2 that is then reduced to PGH2 by two electrons. Similarly catalyzes successive cyclooxygenation and peroxidation of dihomo-gamma-linoleate (DGLA, C20:3(n-6)) and eicosapentaenoate (EPA, C20:5(n-3)) to corresponding PGH1 and PGH3, the precursors of 1- and 3-series prostaglandins. In an alternative pathway of prostanoid biosynthesis, converts 2-arachidonoyl lysophopholipids to prostanoid lysophopholipids, which are then hydrolyzed by intracellular phospholipases to release free prostanoids. Metabolizes 2-arachidonoyl glycerol yielding the glyceryl ester of PGH2, a process that can contribute to pain response. Generates lipid mediators from n-3 and n-6 polyunsaturated fatty acids (PUFAs) via a lipoxygenase-type mechanism. Oxygenates PUFAs to hydroperoxy compounds and then reduces them to corresponding alcohols. Plays a role in the generation of resolution phase interaction products (resolvins) during both sterile and infectious inflammation. Metabolizes docosahexaenoate (DHA, C22:6(n-3)) to 17R-HDHA, a precursor of the D-series resolvins (RvDs). As a component of the biosynthetic pathway of E-series resolvins (RvEs), converts eicosapentaenoate (EPA, C20:5(n-3)) primarily to 18S-HEPE that is further metabolized by ALOX5 and LTA4H to generate 18S-RvE1 and 18S-RvE2. In vascular endothelial cells, converts docosapentaenoate (DPA, C22:5(n-3)) to 13R-HDPA, a precursor for 13-series resolvins (RvTs) shown to activate macrophage phagocytosis during bacterial infection. In activated leukocytes, contributes to oxygenation of hydroxyeicosatetraenoates (HETE) to diHETES (5,15-diHETE and 5,11-diHETE). Can also use linoleate (LA, (9Z,12Z)-octadecadienoate, C18:2(n-6)) as substrate and produce hydroxyoctadecadienoates (HODEs) in a regio- and stereospecific manner, being (9R)-HODE ((9R)-hydroxy-(10E,12Z)-octadecadienoate) and (13S)-HODE ((13S)-hydroxy-(9Z,11E)-octadecadienoate) its major products. During neuroinflammation, plays a role in neuronal secretion of specialized preresolving mediators (SPMs) 15R-lipoxin A4 that regulates phagocytic microglia. This is Prostaglandin G/H synthase 2 (PTGS2) from Neovison vison (American mink).